Here is a 108-residue protein sequence, read N- to C-terminus: Protein YcgL (108 aa).

In terms of domain architecture, YcgL spans methionine 12–leucine 96.

This Shigella sonnei (strain Ss046) protein is Protein YcgL.